The primary structure comprises 25 residues: Aurein-5.1 (25 aa).

It belongs to the frog skin active peptide (FSAP) family. Aurein subfamily. As to expression, expressed by the skin dorsal glands.

It localises to the secreted. Has no antimicrobial or anticancer activity. The sequence is that of Aurein-5.1 from Ranoidea aurea (Green and golden bell frog).